We begin with the raw amino-acid sequence, 97 residues long: Large ribosomal subunit protein bL27 (97 aa).

Positions 1-12 (MLKMNLANLQLF) are excised as a propeptide. The disordered stretch occupies residues 14–37 (HKKGGGSTSNGRDSQAKRLGAKAA).

It belongs to the bacterial ribosomal protein bL27 family. Post-translationally, the N-terminus is cleaved by ribosomal processing cysteine protease Prp.

The sequence is that of Large ribosomal subunit protein bL27 from Streptococcus uberis (strain ATCC BAA-854 / 0140J).